A 122-amino-acid chain; its full sequence is UPF0102 protein cgR_1859 (122 aa).

This sequence belongs to the UPF0102 family.

The chain is UPF0102 protein cgR_1859 from Corynebacterium glutamicum (strain R).